The sequence spans 266 residues: Glutamate racemase (266 aa).

Substrate-binding positions include 9-10 (DS) and 41-42 (YG). Catalysis depends on cysteine 72, which acts as the Proton donor/acceptor. 73-74 (NT) is a substrate binding site. Cysteine 184 acts as the Proton donor/acceptor in catalysis. 185–186 (TH) contributes to the substrate binding site.

The protein belongs to the aspartate/glutamate racemases family.

It carries out the reaction L-glutamate = D-glutamate. Its pathway is cell wall biogenesis; peptidoglycan biosynthesis. In terms of biological role, provides the (R)-glutamate required for cell wall biosynthesis. The sequence is that of Glutamate racemase from Staphylococcus carnosus (strain TM300).